Here is a 464-residue protein sequence, read N- to C-terminus: tRNA modification GTPase MnmE (464 aa).

3 residues coordinate (6S)-5-formyl-5,6,7,8-tetrahydrofolate: Arg25, Glu87, and Lys130. Positions 226–386 (GLSVVLAGQP…LRAELLRIAG (161 aa)) constitute a TrmE-type G domain. A K(+)-binding site is contributed by Asn236. GTP is bound by residues 236–241 (NVGKSS), 255–261 (TPIAGTT), and 280–283 (DTAG). Ser240 lines the Mg(2+) pocket. The K(+) site is built by Thr255, Ile257, and Thr260. Position 261 (Thr261) interacts with Mg(2+). Position 464 (Lys464) interacts with (6S)-5-formyl-5,6,7,8-tetrahydrofolate.

Belongs to the TRAFAC class TrmE-Era-EngA-EngB-Septin-like GTPase superfamily. TrmE GTPase family. In terms of assembly, homodimer. Heterotetramer of two MnmE and two MnmG subunits. Requires K(+) as cofactor.

The protein resides in the cytoplasm. In terms of biological role, exhibits a very high intrinsic GTPase hydrolysis rate. Involved in the addition of a carboxymethylaminomethyl (cmnm) group at the wobble position (U34) of certain tRNAs, forming tRNA-cmnm(5)s(2)U34. The sequence is that of tRNA modification GTPase MnmE from Burkholderia ambifaria (strain MC40-6).